The following is a 345-amino-acid chain: 3-isopropylmalate dehydrogenase (345 aa).

Substrate contacts are provided by arginine 94, arginine 104, arginine 130, and aspartate 215. Positions 215, 239, and 243 each coordinate Mg(2+). An NAD(+)-binding site is contributed by 273–285; the sequence is GSAPDIAGKGIAN.

This sequence belongs to the isocitrate and isopropylmalate dehydrogenases family. LeuB type 1 subfamily. In terms of assembly, homodimer. Requires Mg(2+) as cofactor. Mn(2+) serves as cofactor.

The protein localises to the cytoplasm. It catalyses the reaction (2R,3S)-3-isopropylmalate + NAD(+) = 4-methyl-2-oxopentanoate + CO2 + NADH. The protein operates within amino-acid biosynthesis; L-leucine biosynthesis; L-leucine from 3-methyl-2-oxobutanoate: step 3/4. Functionally, catalyzes the oxidation of 3-carboxy-2-hydroxy-4-methylpentanoate (3-isopropylmalate) to 3-carboxy-4-methyl-2-oxopentanoate. The product decarboxylates to 4-methyl-2 oxopentanoate. The polypeptide is 3-isopropylmalate dehydrogenase (leuB) (Lactococcus lactis subsp. lactis (strain IL1403) (Streptococcus lactis)).